Reading from the N-terminus, the 203-residue chain is Outer-membrane lipoprotein carrier protein (203 aa).

The signal sequence occupies residues 1-21; the sequence is MKKLAITCALLSGMVVSQVWA. The segment at 184-203 is disordered; that stretch reads DASKFTFTPPKGVTVDDQRK.

This sequence belongs to the LolA family. Monomer.

It localises to the periplasm. Participates in the translocation of lipoproteins from the inner membrane to the outer membrane. Only forms a complex with a lipoprotein if the residue after the N-terminal Cys is not an aspartate (The Asp acts as a targeting signal to indicate that the lipoprotein should stay in the inner membrane). This Klebsiella pneumoniae (strain 342) protein is Outer-membrane lipoprotein carrier protein.